Consider the following 314-residue polypeptide: MSSTAAFCLLSTLGGYLVTSFLLLKYPALLHQRKKQRFLSRHISHRGGAGENLENTMAAFQHAVTIGTDMLELDCHITKDEQVVVSHDANLKRSTGVNVNVSDLKYCELPPYLCKLDVPFQRACKCEGTDTRIPLLKEVFEAFPETPINIDIKVNNNVLIQKVSELVKQYKREHLTVWGNASSEIVDKCYKENSDIPILFSLQRVLLILGLFFTGLLPFVPIREQFFEIPMPSIILKLKEPHIISKGHKFLIWLSDTLLMRKALFDHLTARGIQVYIWVLNEEHEYKRAFDLGATGVMTDYPTKLKEFLNNMSA.

The Extracellular portion of the chain corresponds to M1–S3. Residues T4–L24 form a helical membrane-spanning segment. Topologically, residues K25 to D195 are cytoplasmic. One can recognise a GP-PDE domain in the interval S40 to L309. The a divalent metal cation site is built by E72, D74, and H87. A helical membrane pass occupies residues I196–L216. Residues L217–A314 lie on the Extracellular side of the membrane.

Belongs to the glycerophosphoryl diester phosphodiesterase family.

The protein localises to the cytoplasm. Its subcellular location is the membrane. The protein resides in the perinuclear region. It is found in the endoplasmic reticulum. It carries out the reaction a 1-O-alkyl-sn-glycero-3-phosphocholine + H2O = a 1-O-alkyl-sn-glycero-3-phosphate + choline + H(+). The enzyme catalyses 1-hexadecanoyl-sn-glycero-3-phosphocholine + H2O = 1-hexadecanoyl-sn-glycero-3-phosphate + choline + H(+). It catalyses the reaction 1-hexadecanoyl-sn-glycero-3-phosphoethanolamine + H2O = 1-hexadecanoyl-sn-glycero-3-phosphate + ethanolamine + H(+). The catalysed reaction is N-hexadecanoyl-sn-glycero-3-phosphoethanolamine + H2O = N-hexadecanoylethanolamine + sn-glycerol 3-phosphate + H(+). It carries out the reaction N-(5Z,8Z,11Z,14Z-eicosatetraenoyl)-1-(9Z-octadecenoyl)-sn-glycero-3-phosphoethanolamine + H2O = N-(5Z,8Z,11Z,14Z-eicosatetraenoyl)-ethanolamine + 1-(9Z-octadecenoyl)-sn-glycero-3-phosphate + H(+). The enzyme catalyses N,1-di-(9Z-octadecenoyl)-sn-glycero-3-phosphoethanolamine + H2O = N-(9Z-octadecenoyl) ethanolamine + 1-(9Z-octadecenoyl)-sn-glycero-3-phosphate + H(+). It catalyses the reaction N-hexadecanoyl-1-(9Z-octadecenoyl)-sn-glycero-3-phosphoethanolamine + H2O = N-hexadecanoylethanolamine + 1-(9Z-octadecenoyl)-sn-glycero-3-phosphate + H(+). The catalysed reaction is 1-O-hexadecyl-sn-glycero-3-phosphocholine + H2O = 1-O-hexadecyl-sn-glycero-3-phosphate + choline + H(+). It carries out the reaction 1-(9Z-octadecenoyl)-sn-glycero-3-phosphocholine + H2O = 1-(9Z-octadecenoyl)-sn-glycero-3-phosphate + choline + H(+). The enzyme catalyses N,1-dihexadecanoyl-sn-glycero-3-phosphoethanolamine + H2O = N-hexadecanoylethanolamine + 1-hexadecanoyl-sn-glycero-3-phosphate + H(+). It catalyses the reaction 1-O-(1Z-octadecenyl)-sn-glycero-3-phospho-(N-5Z,8Z,11Z,14Z-eicosatetraenoyl)-ethanolamine + H2O = 1-O-(1Z-octadecenyl)-sn-glycero-3-phosphate + N-(5Z,8Z,11Z,14Z-eicosatetraenoyl)-ethanolamine + H(+). The catalysed reaction is 1-O-(1Z-octadecenyl)-sn-glycero-3-phospho-(N-9Z-octadecenoyl)-ethanolamine + H2O = 1-O-(1Z-octadecenyl)-sn-glycero-3-phosphate + N-(9Z-octadecenoyl) ethanolamine + H(+). It carries out the reaction 1-O-(1Z-octadecenyl)-sn-glycero-3-phospho-N-hexadecanoyl-ethanolamine + H2O = 1-O-(1Z-octadecenyl)-sn-glycero-3-phosphate + N-hexadecanoylethanolamine + H(+). With respect to regulation, lysophospholipase D activity is increased by magnesium and manganese and inhibited by calcium in a concentration dependent manner. Loss of lysophospholipase D activity by addition of EDTA. Functionally, hydrolyzes lysoglycerophospholipids to produce lysophosphatidic acid (LPA) and the corresponding amines. Shows a preference for 1-O-alkyl-sn-glycero-3-phosphocholine (lyso-PAF), lysophosphatidylethanolamine (lyso-PE) and lysophosphatidylcholine (lyso-PC). May be involved in bioactive N-acylethanolamine biosynthesis from both N-acyl-lysoplasmenylethanolamin (N-acyl-lysoPlsEt) and N-acyl-lysophosphatidylethanolamin (N-acyl-lysoPE). In addition, hydrolyzes glycerophospho-N-acylethanolamine to N-acylethanolamine. Does not display glycerophosphodiester phosphodiesterase activity, since it cannot hydrolyze either glycerophosphoinositol or glycerophosphocholine. In Rattus norvegicus (Rat), this protein is Lysophospholipase D GDPD1.